Reading from the N-terminus, the 752-residue chain is Primary amine oxidase (752 aa).

The N-terminal stretch at 1–27 (MAILSPRKTALALAVALSCAWQSPAFA) is a signal peptide. Residues 408 to 419 (YLDSGDYGMGTL) and 490 to 495 (VGNYDY) each bind substrate. The active-site Proton acceptor is D410. The active-site Schiff-base intermediate with substrate; via topaquinone is the Y493. Y493 is modified (2',4',5'-topaquinone). H551 and H553 together coordinate Cu cation. 8 residues coordinate Ca(2+): D560, L561, D562, E600, Y694, D697, E699, and D705. D560 is a Mn(2+) binding site. D562 provides a ligand contact to Mn(2+). D705 is a Mn(2+) binding site. H716 contacts Cu cation.

It belongs to the copper/topaquinone oxidase family. In terms of assembly, homodimer. The cofactor is Cu cation. Ca(2+) serves as cofactor. Requires L-topaquinone as cofactor. It depends on Mn(2+) as a cofactor. Topaquinone (TPQ) is generated by copper-dependent autoxidation of a specific tyrosyl residue.

Its subcellular location is the periplasm. It catalyses the reaction a primary methyl amine + O2 + H2O = an aldehyde + H2O2 + NH4(+). Functionally, active on tyramine, tryptamine, beta-phenethylamine and dopamine. In Klebsiella michiganensis (strain ATCC 8724 / DSM 4798 / JCM 20051 / NBRC 3318 / NRRL B-199 / KCTC 1686 / BUCSAV 143 / CCM 1901), this protein is Primary amine oxidase (maoA).